The sequence spans 214 residues: Probable transaldolase (214 aa).

Catalysis depends on K83, which acts as the Schiff-base intermediate with substrate.

The protein belongs to the transaldolase family. Type 3B subfamily.

The protein localises to the cytoplasm. It carries out the reaction D-sedoheptulose 7-phosphate + D-glyceraldehyde 3-phosphate = D-erythrose 4-phosphate + beta-D-fructose 6-phosphate. The protein operates within carbohydrate degradation; pentose phosphate pathway; D-glyceraldehyde 3-phosphate and beta-D-fructose 6-phosphate from D-ribose 5-phosphate and D-xylulose 5-phosphate (non-oxidative stage): step 2/3. In terms of biological role, transaldolase is important for the balance of metabolites in the pentose-phosphate pathway. The chain is Probable transaldolase from Desulfosudis oleivorans (strain DSM 6200 / JCM 39069 / Hxd3) (Desulfococcus oleovorans).